Consider the following 819-residue polypeptide: Aminopeptidase O (819 aa).

Position 479 (His-479) interacts with Zn(2+). Residue Glu-480 is the Proton acceptor of the active site. Zn(2+) contacts are provided by His-483 and Glu-502. The Nucleolar localization signal signature appears at 689–699 (RRPRKRKRREK).

It belongs to the peptidase M1 family. Zn(2+) serves as cofactor.

The protein localises to the nucleus. The protein resides in the nucleolus. It localises to the cytoplasm. Functionally, aminopeptidase which catalyzes the hydrolysis of amino acid residues from the N-terminus of peptide or protein substrates. The sequence is that of Aminopeptidase O from Homo sapiens (Human).